The sequence spans 619 residues: MALLQIAEPGQSSAPHQHRIAIGIDLGTTHSLVATVLSGKPKVLNDVQNRRLLPSIVHYGDNTTHYGEEAKPFIIADPKNTIVSVKRFMGRSKADIKFQHPYELVGSENEMPAFETRAGRKTPVEISAEILKQLKDRAEDSLQNPVNGAVITVPAYFDEAQRQATRDAAQLAGLNVLRLLNEPTAAAVAYGLDQESNLATDRNYVIYDLGGGTFDVSILRFSQGVFEVLATGGHTALGGDDLDRLIVKWAKKQLNIDVLSDEDYAVFIVAARQAKEQLSTQDSVELKLLEATLTLDRPTFESIIQVALDKTISVCKRVLRDAKLELTDIQNVVLVGGSTRSYAVQKAVREVFAQEPLCTINPDEVVAIGASITANQLIGNSQDGSLLLDVTPLSLGLETMGGLVERLISRNTAIPVARRQEFTTYQDGQTAMLIHVVQGERDLVEHCRSLGRFVLHGIPPMTAGQARIEVTFQVDADGLLTVSAREATSGVQAHIDIKPSYGLSEADTERLLIEGFQHAEEDKNLRHLKETKVEAERELESLEQALKVDADLLDEKQLDALNSAKESLKAQLEGSDIQAIEHAVQQLKVHSDAFAALRMNRHIDHALKGTKLDDWSKSN.

The protein belongs to the heat shock protein 70 family.

Chaperone involved in the maturation of iron-sulfur cluster-containing proteins. Has a low intrinsic ATPase activity which is markedly stimulated by HscB. The protein is Chaperone protein HscA homolog of Acinetobacter baumannii (strain AB0057).